We begin with the raw amino-acid sequence, 111 residues long: Colipase (111 aa).

An N-terminal signal peptide occupies residues 1 to 17; it reads MEKVLALVLLTLAVAYA. A propeptide spans 18-22 (enterostatin, activation peptide); sequence APDPR. Cystine bridges form between cysteine 34-cysteine 45, cysteine 40-cysteine 56, cysteine 44-cysteine 78, cysteine 66-cysteine 86, and cysteine 80-cysteine 104.

This sequence belongs to the colipase family. In terms of assembly, forms a 1:1 stoichiometric complex with pancreatic lipase. As to expression, expressed by the pancreas.

It localises to the secreted. Colipase is a cofactor of pancreatic lipase. It allows the lipase to anchor itself to the lipid-water interface. Without colipase the enzyme is washed off by bile salts, which have an inhibitory effect on the lipase. In terms of biological role, enterostatin has a biological activity as a satiety signal. This chain is Colipase (CLPS), found in Myocastor coypus (Coypu).